The following is a 144-amino-acid chain: Large ribosomal subunit protein uL11 (144 aa).

Belongs to the universal ribosomal protein uL11 family. Part of the ribosomal stalk of the 50S ribosomal subunit. Interacts with L10 and the large rRNA to form the base of the stalk. L10 forms an elongated spine to which L12 dimers bind in a sequential fashion forming a multimeric L10(L12)X complex. Post-translationally, one or more lysine residues are methylated.

Forms part of the ribosomal stalk which helps the ribosome interact with GTP-bound translation factors. This Marinomonas sp. (strain MWYL1) protein is Large ribosomal subunit protein uL11.